The primary structure comprises 57 residues: MLKWALIFFVISLIAGFLGFSGVSAATAGIAKILFYIAVIIFLVFLVLALAVGGAVT.

A run of 2 helical transmembrane segments spans residues 4–24 (WALI…SGVS) and 33–53 (ILFY…LAVG).

The protein belongs to the UPF0391 family.

The protein resides in the cell membrane. The chain is UPF0391 membrane protein RB0084 from Rhizobium meliloti (strain 1021) (Ensifer meliloti).